The sequence spans 136 residues: MQASAAFPKAARLLKTDEFSSVFRLRPWRRTAHFVIYGKPTGRDARLGLVIGKKYAARAVTRNLVKRLAREAFRTRRAEFAGWDILLRLHTRFDKKAMPSAASAPLAALCAGEIRELLDRAAREVARRNGAKPASE.

The protein belongs to the RnpA family. As to quaternary structure, consists of a catalytic RNA component (M1 or rnpB) and a protein subunit.

It carries out the reaction Endonucleolytic cleavage of RNA, removing 5'-extranucleotides from tRNA precursor.. Its function is as follows. RNaseP catalyzes the removal of the 5'-leader sequence from pre-tRNA to produce the mature 5'-terminus. It can also cleave other RNA substrates such as 4.5S RNA. The protein component plays an auxiliary but essential role in vivo by binding to the 5'-leader sequence and broadening the substrate specificity of the ribozyme. The chain is Ribonuclease P protein component from Burkholderia mallei (strain NCTC 10247).